The chain runs to 1053 residues: Carbamoyl phosphate synthase large chain (1053 aa).

The interval 1 to 397 is carboxyphosphate synthetic domain; the sequence is MPKRTDIKKV…SFMKAKRSID (397 aa). Residues R127, R167, G173, G174, E206, V208, E213, G239, I240, H241, Q282, and E294 each coordinate ATP. The ATP-grasp 1 domain maps to 131–323; it reads RDLMNEIGEP…IARVAAKIAI (193 aa). Positions 282, 294, and 296 each coordinate Mg(2+). Mn(2+)-binding residues include Q282, E294, and N296. The oligomerization domain stretch occupies residues 398-530; sequence TDVRTHTSPS…YSTREGTSEI (133 aa). The tract at residues 531-919 is carbamoyl phosphate synthetic domain; that stretch reads VRDKKQKILI…YKACISADNE (389 aa). The ATP-grasp 2 domain maps to 661–852; it reads SVLLTTLQIP…IAKIAAKVMI (192 aa). 10 residues coordinate ATP: R697, S736, L738, E743, G768, I769, H770, S771, Q811, and E823. Mg(2+) is bound by residues Q811, E823, and N825. Residues Q811, E823, and N825 each coordinate Mn(2+). The region spanning 918–1053 is the MGS-like domain; it reads NELPLKGNVF…TLEPLSHYLR (136 aa). The allosteric domain stretch occupies residues 920-1053; sequence LPLKGNVFVS…TLEPLSHYLR (134 aa).

This sequence belongs to the CarB family. In terms of assembly, composed of two chains; the small (or glutamine) chain promotes the hydrolysis of glutamine to ammonia, which is used by the large (or ammonia) chain to synthesize carbamoyl phosphate. Tetramer of heterodimers (alpha,beta)4. Mg(2+) is required as a cofactor. Mn(2+) serves as cofactor.

It catalyses the reaction hydrogencarbonate + L-glutamine + 2 ATP + H2O = carbamoyl phosphate + L-glutamate + 2 ADP + phosphate + 2 H(+). It carries out the reaction hydrogencarbonate + NH4(+) + 2 ATP = carbamoyl phosphate + 2 ADP + phosphate + 2 H(+). Its pathway is amino-acid biosynthesis; L-arginine biosynthesis; carbamoyl phosphate from bicarbonate: step 1/1. It functions in the pathway pyrimidine metabolism; UMP biosynthesis via de novo pathway; (S)-dihydroorotate from bicarbonate: step 1/3. Its function is as follows. Large subunit of the glutamine-dependent carbamoyl phosphate synthetase (CPSase). CPSase catalyzes the formation of carbamoyl phosphate from the ammonia moiety of glutamine, carbonate, and phosphate donated by ATP, constituting the first step of 2 biosynthetic pathways, one leading to arginine and/or urea and the other to pyrimidine nucleotides. The large subunit (synthetase) binds the substrates ammonia (free or transferred from glutamine from the small subunit), hydrogencarbonate and ATP and carries out an ATP-coupled ligase reaction, activating hydrogencarbonate by forming carboxy phosphate which reacts with ammonia to form carbamoyl phosphate. This Methanoregula boonei (strain DSM 21154 / JCM 14090 / 6A8) protein is Carbamoyl phosphate synthase large chain.